Consider the following 47-residue polypeptide: RVCESQSHGFKGACTGDHNCALVCRNEGFSGGNCRGFRRRCFCTLKC.

4 disulfide bridges follow: cysteine 3–cysteine 47, cysteine 14–cysteine 34, cysteine 20–cysteine 41, and cysteine 24–cysteine 43.

As to quaternary structure, monomer and homodimer.

Functionally, inhibits trypsin but not chymotrypsin. The sequence is that of Defensin-like protein 1 from Vigna unguiculata (Cowpea).